The chain runs to 72 residues: Translation initiation factor IF-1 (72 aa).

The S1-like domain maps to 1–72 (MSKDDVIEID…DKGRITYRYK (72 aa)).

Belongs to the IF-1 family. Component of the 30S ribosomal translation pre-initiation complex which assembles on the 30S ribosome in the order IF-2 and IF-3, IF-1 and N-formylmethionyl-tRNA(fMet); mRNA recruitment can occur at any time during PIC assembly.

The protein localises to the cytoplasm. One of the essential components for the initiation of protein synthesis. Stabilizes the binding of IF-2 and IF-3 on the 30S subunit to which N-formylmethionyl-tRNA(fMet) subsequently binds. Helps modulate mRNA selection, yielding the 30S pre-initiation complex (PIC). Upon addition of the 50S ribosomal subunit IF-1, IF-2 and IF-3 are released leaving the mature 70S translation initiation complex. The sequence is that of Translation initiation factor IF-1 from Campylobacter hominis (strain ATCC BAA-381 / DSM 21671 / CCUG 45161 / LMG 19568 / NCTC 13146 / CH001A).